The sequence spans 348 residues: Histidinol-phosphate aminotransferase (348 aa).

Lys-210 bears the N6-(pyridoxal phosphate)lysine mark.

The protein belongs to the class-II pyridoxal-phosphate-dependent aminotransferase family. Histidinol-phosphate aminotransferase subfamily. As to quaternary structure, homodimer. Requires pyridoxal 5'-phosphate as cofactor.

It carries out the reaction L-histidinol phosphate + 2-oxoglutarate = 3-(imidazol-4-yl)-2-oxopropyl phosphate + L-glutamate. It functions in the pathway amino-acid biosynthesis; L-histidine biosynthesis; L-histidine from 5-phospho-alpha-D-ribose 1-diphosphate: step 7/9. This Pseudomonas putida (strain W619) protein is Histidinol-phosphate aminotransferase.